The following is a 294-amino-acid chain: Shell matrix protein (294 aa).

Component of the organic matrix of calcified shell layers like nacre and prisms.

It localises to the secreted. This Mytilus californianus (California mussel) protein is Shell matrix protein.